The sequence spans 187 residues: BCL2/adenovirus E1B 19 kDa protein-interacting protein 3 (187 aa).

Positions 42–86 (LDAQHESGRSSSKSSHCDSPPRSQTPQDTNRAEIDSHSFGEKNST) are disordered. 6 positions are modified to phosphoserine: Ser-48, Ser-60, Ser-77, Ser-79, Ser-85, and Ser-88. Residues 50 to 63 (RSSSKSSHCDSPPR) are compositionally biased toward low complexity. Residues 71–81 (NRAEIDSHSFG) are compositionally biased toward basic and acidic residues. Positions 93–118 (IERRREVESILKKNSDWIWDWSSRPE) match the BH3 motif. Residues 157–177 (VFLPSLLLSHLLAIGLGIYIG) traverse the membrane as a helical segment.

The protein belongs to the NIP3 family. Homodimer. Binds to BCL2. Interacts with BNIP3L and ACAA2. Interacts (via BH3 domain) with SPATA18 (via coiled-coil domains). Interacts with BOK; promotes BOK oligomerization. Interacts with PPTC7; this interaction promotes BNIP3 degradation.

The protein resides in the mitochondrion. Its subcellular location is the mitochondrion outer membrane. In terms of biological role, apoptosis-inducing protein that can overcome BCL2 suppression. May play a role in repartitioning calcium between the two major intracellular calcium stores in association with BCL2. Involved in mitochondrial quality control via its interaction with SPATA18/MIEAP: in response to mitochondrial damage, participates in mitochondrial protein catabolic process (also named MALM) leading to the degradation of damaged proteins inside mitochondria. The physical interaction of SPATA18/MIEAP, BNIP3 and BNIP3L/NIX at the mitochondrial outer membrane may play a critical role in the translocation of lysosomal proteins from the cytoplasm to the mitochondrial matrix. The physical interaction of SPATA18/MIEAP, BNIP3 and BNIP3L/NIX at the mitochondrial outer membrane regulates the opening of a pore in the mitochondrial double membrane in order to mediate the translocation of lysosomal proteins from the cytoplasm to the mitochondrial matrix. Plays an important role in the calprotectin (S100A8/A9)-induced cell death pathway. This Mus musculus (Mouse) protein is BCL2/adenovirus E1B 19 kDa protein-interacting protein 3.